A 329-amino-acid chain; its full sequence is Short-chain dehydrogenase/reductase prx4 (329 aa).

Residues 1–21 (MIPRWQPASIALLLHLDTLRC) form the signal peptide. NADP(+) contacts are provided by S58, I60, and N81. N91 carries an N-linked (GlcNAc...) asparagine glycan. Residues D98, N121, K161, Y194, K198, and T229 each coordinate NADP(+). The Proton acceptor role is filled by Y194. The Lowers pKa of active site Tyr role is filled by K198. A helical membrane pass occupies residues 238 to 258 (GPLMAAGLPVSSAHMVGLAVV).

This sequence belongs to the short-chain dehydrogenases/reductases (SDR) family.

It localises to the membrane. The protein operates within sesquiterpene biosynthesis. Its function is as follows. Short-chain dehydrogenase/reductase; part of the gene cluster that mediates the biosynthesis of PR-toxin, a bicyclic sesquiterpene belonging to the eremophilane class and acting as a mycotoxin. The first step of the pathway is catalyzed by the aristolochene synthase which performs the cyclization of trans,trans-farnesyl diphosphate (FPP) to the bicyclic sesquiterpene aristolochene. Following the formation of aristolochene, the non-oxygenated aristolochene is converted to the trioxygenated intermediate eremofortin B, via 7-epi-neopetasone. This conversion appears to involve three enzymes, a hydroxysterol oxidase-like enzyme, the quinone-oxidase prx3 that forms the quinone-type-structure in the bicyclic nucleus of aristolochene with the C8-oxo group and the C-3 hydroxyl group, and the P450 monooxygenase prx9 that introduces the epoxide at the double bond between carbons 1 and 2. No monoxy or dioxy-intermediates have been reported to be released to the broth, so these three early oxidative reactions may be coupled together. Eremofortin B is further oxidized by another P450 monooxygenase, that introduces a second epoxide between carbons 7 and 11 prior to acetylation to eremofortin A by the acetyltransferase prx11. The second epoxidation may be performed by a second P450 monooxygenase. After the acetylation step, eremofortin A is converted to eremofortin C and then to PR-toxin. First the conversion of eremofortin A to eremofortin C proceeds by oxidation of the side chain of the molecule at C-12 and is catalyzed by the short-chain oxidoreductase prx1. The cytochrome P450 monooxygenase prx8 also plays a role in this step. The primary alcohol formed at C-12 is finally oxidized by the short-chain alcohol dehydrogenase prx4 that forms PR-toxin. This is Short-chain dehydrogenase/reductase prx4 from Penicillium rubens (strain ATCC 28089 / DSM 1075 / NRRL 1951 / Wisconsin 54-1255) (Penicillium chrysogenum).